A 522-amino-acid polypeptide reads, in one-letter code: L-aspartate oxidase (522 aa).

FAD-binding positions include 16 to 19 (SGMA) and 45 to 52 (SSAWAQGG). The active-site Proton donor/acceptor is the R277. Residues E360 and 376–377 (SL) contribute to the FAD site.

This sequence belongs to the FAD-dependent oxidoreductase 2 family. NadB subfamily. FAD is required as a cofactor.

The protein localises to the cytoplasm. It carries out the reaction L-aspartate + O2 = iminosuccinate + H2O2. It participates in cofactor biosynthesis; NAD(+) biosynthesis; iminoaspartate from L-aspartate (oxidase route): step 1/1. Catalyzes the oxidation of L-aspartate to iminoaspartate, the first step in the de novo biosynthesis of NAD(+). This is L-aspartate oxidase (nadB) from Agrobacterium fabrum (strain C58 / ATCC 33970) (Agrobacterium tumefaciens (strain C58)).